We begin with the raw amino-acid sequence, 626 residues long: Janus kinase and microtubule-interacting protein 1 (626 aa).

A disordered region spans residues 1–22 (MSKKGRSKGEKPEMETDAVQMA). Positions 1 to 365 (MSKKGRSKGE…KIKNLTRENV (365 aa)) are mediates association with microtubules. Coiled-coil stretches lie at residues 19–255 (VQMA…EAER) and 284–413 (ERDV…DDLS). The mediates interaction with TYK2 and GABBR1 stretch occupies residues 365–626 (VEMKEKLSAQ…ILFEPKLKFM (262 aa)). Phosphoserine is present on Ser382. The segment covering 452-461 (ETLSETSYNT) has biased composition (polar residues). Residues 452-477 (ETLSETSYNTDRTDRTPATPEEDLDD) are disordered. The residue at position 470 (Thr470) is a Phosphothreonine. The stretch at 490-604 (QLTREYQALQ…EFRVLELEVR (115 aa)) forms a coiled coil.

The protein belongs to the JAKMIP family. As to quaternary structure, homodimer. Forms a complex with GABBR1 and KIF5B/kinesin-1. Interacts with JAK1 and TYK2. In terms of tissue distribution, predominantly expressed in neural tissues and lymphoid cells (at protein level). Isoform 2, isoform 3 and isoform 4 are specifically expressed in brain and retina. Isoform 1 and isoform 5 are also detected in liver, lung and skeletal muscle. Also detected in testis and to a lower extent spleen and intestine.

The protein resides in the cytoplasm. The protein localises to the cytoskeleton. Its subcellular location is the membrane. Its function is as follows. Associates with microtubules and may play a role in the microtubule-dependent transport of the GABA-B receptor. May play a role in JAK1 signaling and regulate microtubule cytoskeleton rearrangements. In Homo sapiens (Human), this protein is Janus kinase and microtubule-interacting protein 1 (JAKMIP1).